We begin with the raw amino-acid sequence, 450 residues long: Solute carrier family 52, riboflavin transporter, member 2 (450 aa).

Transmembrane regions (helical) follow at residues Leu-14 to Leu-34, Leu-47 to Leu-67, Gly-86 to Ala-106, Val-112 to Phe-132, and Phe-147 to Val-167. Residue Asn-178 is glycosylated (N-linked (GlcNAc...) asparagine). Residues Phe-201–Leu-221 traverse the membrane as a helical segment. The span at Thr-227 to Leu-236 shows a compositional bias: low complexity. The disordered stretch occupies residues Thr-227–Gly-264. Over residues Gly-242 to Ala-252 the composition is skewed to acidic residues. The next 5 helical transmembrane spans lie at Ala-282–Val-302, Leu-317–Leu-337, Leu-344–Leu-364, Pro-369–Gly-389, and Ala-409–Phe-429.

This sequence belongs to the riboflavin transporter family.

Its subcellular location is the cell membrane. It catalyses the reaction riboflavin(in) = riboflavin(out). Riboflavin transport is Na(+)-independent but moderately pH-sensitive. Activity is strongly inhibited by riboflavin analogs, such as lumiflavin. Weakly inhibited by flavin adenine dinucleotide (FAD) and flavin mononucleotide (FMN). Its function is as follows. Plasma membrane transporter mediating the uptake by cells of the water soluble vitamin B2/riboflavin that plays a key role in biochemical oxidation-reduction reactions of the carbohydrate, lipid, and amino acid metabolism. May also act as a receptor for 4-hydroxybutyrate. This chain is Solute carrier family 52, riboflavin transporter, member 2 (Slc52a2), found in Mus musculus (Mouse).